The sequence spans 270 residues: CASP-like protein 4A1 (270 aa).

Residues 1–110 (MEELEKTQKF…PSFSSSSSTP (110 aa)) are disordered. The Cytoplasmic segment spans residues 1 to 121 (MEELEKTQKF…ESKWASLIRK (121 aa)). Over residues 24–66 (SSPINFEMSSRSSLHSLPQTTIESPPDSPTLSSIPDSHGSSPH) the composition is skewed to polar residues. Basic and acidic residues predominate over residues 85–97 (NGEEEKKVSESRR). Residues 100-110 (RPSFSSSSSTP) show a composition bias toward low complexity. A helical membrane pass occupies residues 122-142 (ALLGFRVIAFVSCLVSFSVMV). The Extracellular portion of the chain corresponds to 143–161 (SDRDKGWAHDSFYNYKEFR). A helical membrane pass occupies residues 162–182 (FCLAANVIGFVYSGFMICDLV). At 183-198 (YLLSTSIRRSRHNLRH) the chain is on the cytoplasmic side. A helical membrane pass occupies residues 199–221 (FLEFGLDQMLAYLLASASTSASI). Residues 222 to 246 (RVDDWQSNWGADKFPDLARASVALS) are Extracellular-facing. Residues 247–267 (YVSFVAFAFCSLASGYALCAL) traverse the membrane as a helical segment. Topologically, residues 268–270 (RSI) are cytoplasmic.

Belongs to the Casparian strip membrane proteins (CASP) family. In terms of assembly, homodimer and heterodimers.

It localises to the cell membrane. In Arabidopsis thaliana (Mouse-ear cress), this protein is CASP-like protein 4A1.